A 249-amino-acid polypeptide reads, in one-letter code: Flagellar L-ring protein (249 aa).

An N-terminal signal peptide occupies residues 1 to 25 (MSRLRTSHALRTAAALVAVGCLASG). The N-palmitoyl cysteine moiety is linked to residue Cys-26. Residue Cys-26 is the site of S-diacylglycerol cysteine attachment.

Belongs to the FlgH family. As to quaternary structure, the basal body constitutes a major portion of the flagellar organelle and consists of four rings (L,P,S, and M) mounted on a central rod.

It localises to the cell outer membrane. Its subcellular location is the bacterial flagellum basal body. Assembles around the rod to form the L-ring and probably protects the motor/basal body from shearing forces during rotation. This chain is Flagellar L-ring protein, found in Afipia carboxidovorans (strain ATCC 49405 / DSM 1227 / KCTC 32145 / OM5) (Oligotropha carboxidovorans).